A 117-amino-acid chain; its full sequence is Putative membrane protein insertion efficiency factor (117 aa).

Belongs to the UPF0161 family.

It localises to the cell inner membrane. Functionally, could be involved in insertion of integral membrane proteins into the membrane. The polypeptide is Putative membrane protein insertion efficiency factor (Nitrobacter winogradskyi (strain ATCC 25391 / DSM 10237 / CIP 104748 / NCIMB 11846 / Nb-255)).